The sequence spans 324 residues: Beta-ketoacyl-[acyl-carrier-protein] synthase III (324 aa).

Active-site residues include cysteine 112 and histidine 249. Residues 250–254 form an ACP-binding region; the sequence is QANRR. Asparagine 279 is an active-site residue.

The protein belongs to the thiolase-like superfamily. FabH family. In terms of assembly, homodimer.

The protein resides in the cytoplasm. It catalyses the reaction malonyl-[ACP] + acetyl-CoA + H(+) = 3-oxobutanoyl-[ACP] + CO2 + CoA. It participates in lipid metabolism; fatty acid biosynthesis. Functionally, catalyzes the condensation reaction of fatty acid synthesis by the addition to an acyl acceptor of two carbons from malonyl-ACP. Catalyzes the first condensation reaction which initiates fatty acid synthesis and may therefore play a role in governing the total rate of fatty acid production. Possesses both acetoacetyl-ACP synthase and acetyl transacylase activities. Its substrate specificity determines the biosynthesis of branched-chain and/or straight-chain of fatty acids. In Streptococcus pyogenes serotype M1, this protein is Beta-ketoacyl-[acyl-carrier-protein] synthase III.